The sequence spans 308 residues: Homoserine kinase (308 aa).

85-95 lines the ATP pocket; it reads PLTRGLGSSAA.

This sequence belongs to the GHMP kinase family. Homoserine kinase subfamily.

It localises to the cytoplasm. It carries out the reaction L-homoserine + ATP = O-phospho-L-homoserine + ADP + H(+). It functions in the pathway amino-acid biosynthesis; L-threonine biosynthesis; L-threonine from L-aspartate: step 4/5. In terms of biological role, catalyzes the ATP-dependent phosphorylation of L-homoserine to L-homoserine phosphate. This is Homoserine kinase from Caldicellulosiruptor saccharolyticus (strain ATCC 43494 / DSM 8903 / Tp8T 6331).